A 237-amino-acid chain; its full sequence is 1-(5-phosphoribosyl)-5-[(5-phosphoribosylamino)methylideneamino] imidazole-4-carboxamide isomerase (237 aa).

The Proton acceptor role is filled by Asp-8. The active-site Proton donor is Asp-129.

This sequence belongs to the HisA/HisF family.

It is found in the cytoplasm. It catalyses the reaction 1-(5-phospho-beta-D-ribosyl)-5-[(5-phospho-beta-D-ribosylamino)methylideneamino]imidazole-4-carboxamide = 5-[(5-phospho-1-deoxy-D-ribulos-1-ylimino)methylamino]-1-(5-phospho-beta-D-ribosyl)imidazole-4-carboxamide. It participates in amino-acid biosynthesis; L-histidine biosynthesis; L-histidine from 5-phospho-alpha-D-ribose 1-diphosphate: step 4/9. This Alkaliphilus metalliredigens (strain QYMF) protein is 1-(5-phosphoribosyl)-5-[(5-phosphoribosylamino)methylideneamino] imidazole-4-carboxamide isomerase.